The primary structure comprises 428 residues: Kynureninase (428 aa).

Residues Thr-104, Thr-105, 132-135 (FPSD), Asp-213, His-216, and Tyr-238 contribute to the pyridoxal 5'-phosphate site. Lys-239 is subject to N6-(pyridoxal phosphate)lysine. Pyridoxal 5'-phosphate is bound by residues Trp-267 and Thr-295.

The protein belongs to the kynureninase family. In terms of assembly, homodimer. Pyridoxal 5'-phosphate is required as a cofactor.

It catalyses the reaction L-kynurenine + H2O = anthranilate + L-alanine + H(+). The enzyme catalyses 3-hydroxy-L-kynurenine + H2O = 3-hydroxyanthranilate + L-alanine + H(+). It functions in the pathway amino-acid degradation; L-kynurenine degradation; L-alanine and anthranilate from L-kynurenine: step 1/1. It participates in cofactor biosynthesis; NAD(+) biosynthesis; quinolinate from L-kynurenine: step 2/3. Functionally, catalyzes the cleavage of L-kynurenine (L-Kyn) and L-3-hydroxykynurenine (L-3OHKyn) into anthranilic acid (AA) and 3-hydroxyanthranilic acid (3-OHAA), respectively. The polypeptide is Kynureninase (Bacillus anthracis).